We begin with the raw amino-acid sequence, 315 residues long: tRNA dimethylallyltransferase (315 aa).

14-21 (GATATGKS) lines the ATP pocket. 16–21 (TATGKS) provides a ligand contact to substrate. The interaction with substrate tRNA stretch occupies residues 39-42 (DSRQ).

The protein belongs to the IPP transferase family. As to quaternary structure, monomer. It depends on Mg(2+) as a cofactor.

It carries out the reaction adenosine(37) in tRNA + dimethylallyl diphosphate = N(6)-dimethylallyladenosine(37) in tRNA + diphosphate. Its function is as follows. Catalyzes the transfer of a dimethylallyl group onto the adenine at position 37 in tRNAs that read codons beginning with uridine, leading to the formation of N6-(dimethylallyl)adenosine (i(6)A). This Microcystis aeruginosa (strain NIES-843 / IAM M-2473) protein is tRNA dimethylallyltransferase.